The primary structure comprises 572 residues: Glutathione hydrolase 5 proenzyme (572 aa).

Residues 1–6 lie on the Cytoplasmic side of the membrane; that stretch reads MAWGHR. A helical; Signal-anchor for type II membrane protein transmembrane segment spans residues 7 to 29; the sequence is TTVCLVLLGVSLGLAIIVLAVVL. The Extracellular segment spans residues 30 to 572; the sequence is PHHQASCRPD…LRKAGKASGY (543 aa). An N-linked (GlcNAc...) asparagine glycan is attached at Asn-98. Arg-110 is an L-glutamate binding site. 7 N-linked (GlcNAc...) asparagine glycosylation sites follow: Asn-185, Asn-194, Asn-204, Asn-277, Asn-303, Asn-347, and Asn-377. Residue Thr-388 is the Nucleophile of the active site. L-glutamate contacts are provided by residues Thr-406, Glu-427, and 453 to 454; that span reads SS.

This sequence belongs to the gamma-glutamyltransferase family. As to quaternary structure, heterodimer composed of the light and heavy chains. The active site is located in the light chain. Cleaved by autocatalysis into a large and a small subunit. In terms of processing, glycosylated. As to expression, widely expressed, but at low level, except in the airway epithelial cells. Detected in brain, heart, kidney, liver, lung, spleen, testis and trachea.

It localises to the membrane. It catalyses the reaction glutathione + H2O = L-cysteinylglycine + L-glutamate. The enzyme catalyses an S-substituted glutathione + H2O = an S-substituted L-cysteinylglycine + L-glutamate. The catalysed reaction is leukotriene C4 + H2O = leukotriene D4 + L-glutamate. It carries out the reaction S-[(2E,6E,10E)-geranylgeranyl]-L-glutathione + H2O = S-[(2E,6E,10E)-geranylgeranyl]-L-cysteinylglycine + L-glutamate. It catalyses the reaction an N-terminal (5-L-glutamyl)-[peptide] + an alpha-amino acid = 5-L-glutamyl amino acid + an N-terminal L-alpha-aminoacyl-[peptide]. Its pathway is lipid metabolism; leukotriene D4 biosynthesis. It functions in the pathway sulfur metabolism; glutathione metabolism. With respect to regulation, inhibited by serine-borate. Functionally, cleaves the gamma-glutamyl bond of extracellular glutathione tripeptide (gamma-Glu-Cys-Gly) and certain glutathione conjugates. Hydrolyzes glutathione releasing L-Glu and Cys-Gly dipeptide which is further metabolized to maintain extracellular cysteine levels but also to provide cysteine necessary for intracellular glutathione synthesis. Among glutathione-S-conjugates metabolizes leukotriene C4 (LTC4) and S-geranylgeranyl-glutathione (GGG), but is inactive toward gamma-glutamyl leucine. Converts extracellular LTC4 to LTD4 during acute inflammatory response. Acts as a negative regulator of GGG bioactivity. GGT5 (via GGG catabolism) and ABCC1 (via extracellular transport) establish GGG gradients within lymphoid tissues to position P2RY8-positive lymphocytes at germinal centers in lymphoid follicles and restrict their chemotactic transmigration from blood vessels to bone marrow parenchyma. The transpeptidation reaction, i.e. the transfer of gamma-glutamyl moiety to an acceptor molecule to yield a new gamma-glutamyl compound requires high concentration of dipeptide acceptor and is considered nonphysiological. In Rattus norvegicus (Rat), this protein is Glutathione hydrolase 5 proenzyme (Ggt5).